We begin with the raw amino-acid sequence, 339 residues long: Glucokinase (339 aa).

Residue 16-21 (GDIGGT) coordinates ATP.

The protein belongs to the bacterial glucokinase family.

It is found in the cytoplasm. The enzyme catalyses D-glucose + ATP = D-glucose 6-phosphate + ADP + H(+). This chain is Glucokinase, found in Rhizobium meliloti (strain 1021) (Ensifer meliloti).